A 1407-amino-acid polypeptide reads, in one-letter code: DNA-directed RNA polymerase subunit beta' (1407 aa).

The Zn(2+) site is built by Cys70, Cys72, Cys85, and Cys88. The Mg(2+) site is built by Asp460, Asp462, and Asp464. Zn(2+) contacts are provided by Cys814, Cys888, Cys895, and Cys898. Lys972 is subject to N6-acetyllysine.

It belongs to the RNA polymerase beta' chain family. As to quaternary structure, the RNAP catalytic core consists of 2 alpha, 1 beta, 1 beta' and 1 omega subunit. When a sigma factor is associated with the core the holoenzyme is formed, which can initiate transcription. The cofactor is Mg(2+). It depends on Zn(2+) as a cofactor.

It carries out the reaction RNA(n) + a ribonucleoside 5'-triphosphate = RNA(n+1) + diphosphate. Its function is as follows. DNA-dependent RNA polymerase catalyzes the transcription of DNA into RNA using the four ribonucleoside triphosphates as substrates. This chain is DNA-directed RNA polymerase subunit beta', found in Escherichia coli (strain SMS-3-5 / SECEC).